A 108-amino-acid polypeptide reads, in one-letter code: UPF0060 membrane protein Spro_2289 (108 aa).

4 helical membrane passes run 6–26 (LLFF…YLWL), 31–51 (SAWL…LLTL), 61–81 (AAYG…VDGV), and 85–105 (ALDW…VSGW).

It belongs to the UPF0060 family.

It is found in the cell inner membrane. This chain is UPF0060 membrane protein Spro_2289, found in Serratia proteamaculans (strain 568).